Reading from the N-terminus, the 447-residue chain is Elongation factor 1-alpha (447 aa).

One can recognise a tr-type G domain in the interval 5 to 230 (KIHISIVVIG…DQINEPKRPS (226 aa)). Residues 14–21 (GHVDSGKS) are G1. Position 14 to 21 (14 to 21 (GHVDSGKS)) interacts with GTP. At lysine 55 the chain carries N6,N6-dimethyllysine. The segment at 70 to 74 (GITID) is G2. Residue lysine 79 is modified to N6,N6,N6-trimethyllysine. Residues 91 to 94 (DAPG) are G3. GTP-binding positions include 91–95 (DAPGH) and 153–156 (NKMD). Residues 153–156 (NKMD) form a G4 region. Lysine 187 carries the N6,N6,N6-trimethyllysine modification. The G5 stretch occupies residues 194 to 196 (SGF). The residue at position 261 (lysine 261) is an N6-methyllysine. Glutamate 289 is modified (5-glutamyl glycerylphosphorylethanolamine). An N6,N6,N6-trimethyllysine modification is found at lysine 306. Residue glutamate 362 is modified to 5-glutamyl glycerylphosphorylethanolamine. The residue at position 396 (lysine 396) is an N6,N6,N6-trimethyllysine.

Belongs to the TRAFAC class translation factor GTPase superfamily. Classic translation factor GTPase family. EF-Tu/EF-1A subfamily.

The protein resides in the cytoplasm. In terms of biological role, this protein promotes the GTP-dependent binding of aminoacyl-tRNA to the A-site of ribosomes during protein biosynthesis. This is Elongation factor 1-alpha from Hordeum vulgare (Barley).